We begin with the raw amino-acid sequence, 249 residues long: Small ribosomal subunit protein uS2 (249 aa).

Belongs to the universal ribosomal protein uS2 family.

This is Small ribosomal subunit protein uS2 from Listeria innocua serovar 6a (strain ATCC BAA-680 / CLIP 11262).